Reading from the N-terminus, the 271-residue chain is Orotidine 5'-phosphate decarboxylase (271 aa).

Residue Lys97 is the Proton donor of the active site.

Belongs to the OMP decarboxylase family. Type 2 subfamily.

It carries out the reaction orotidine 5'-phosphate + H(+) = UMP + CO2. The protein operates within pyrimidine metabolism; UMP biosynthesis via de novo pathway; UMP from orotate: step 2/2. The protein is Orotidine 5'-phosphate decarboxylase of Leptospira borgpetersenii serovar Hardjo-bovis (strain L550).